The chain runs to 230 residues: Orotidine 5'-phosphate decarboxylase (230 aa).

Substrate is bound by residues D10, K32, 59–68 (DLKYHDIPNT), T119, R180, Q189, G209, and R210. Residue K61 is the Proton donor of the active site.

This sequence belongs to the OMP decarboxylase family. Type 1 subfamily. In terms of assembly, homodimer.

The catalysed reaction is orotidine 5'-phosphate + H(+) = UMP + CO2. It functions in the pathway pyrimidine metabolism; UMP biosynthesis via de novo pathway; UMP from orotate: step 2/2. In terms of biological role, catalyzes the decarboxylation of orotidine 5'-monophosphate (OMP) to uridine 5'-monophosphate (UMP). In Actinobacillus pleuropneumoniae serotype 5b (strain L20), this protein is Orotidine 5'-phosphate decarboxylase.